The chain runs to 547 residues: RING finger protein ETP1 homolog (547 aa).

The RING-type zinc-finger motif lies at 208 to 248; sequence CVVCLERMDSSITGLITIVCQHTFHCPCLQKWGNSSCPVCR. The UBP-type; degenerate zinc finger occupies 245–338; it reads PVCRYTQKVQ…GKLVELSTDG (94 aa). Residues cysteine 262, cysteine 265, cysteine 274, cysteine 277, cysteine 282, histidine 289, histidine 293, and histidine 299 each contribute to the Zn(2+) site. Residues 514 to 523 show a composition bias toward polar residues; the sequence is LPNNSTVRSN. Residues 514–547 are disordered; the sequence is LPNNSTVRSNSVKSKKKKKKKPVVPSSSGSLGTD. Residues 526–535 are compositionally biased toward basic residues; it reads KSKKKKKKKP.

The protein localises to the cytoplasm. Functionally, may act as a cytoplasmic retention protein with a role in regulating nuclear transport. The polypeptide is RING finger protein ETP1 homolog (Schizosaccharomyces pombe (strain 972 / ATCC 24843) (Fission yeast)).